We begin with the raw amino-acid sequence, 950 residues long: Double-stranded RNA-binding protein Staufen homolog (950 aa).

Disordered stretches follow at residues 25-168 (VSGA…QQQQ), 202-274 (QQQL…QPST), and 288-342 (VTPV…NTKE). Low complexity predominate over residues 31–43 (QQRSMMSQQRGGS). Positions 45–66 (AINSSKSPYQLQTSSISQFSHL) are enriched in polar residues. Positions 67–77 (QQQQQQQQQQQ) are enriched in low complexity. Positions 78–122 (LVNNYHKQKQMSPDITSHQFSSSTGGGMPTQNGNYQSMSGSSIHT) are enriched in polar residues. Low complexity-rich tracts occupy residues 130 to 143 (QLSLQHQHHQYSSQ), 153 to 168 (QQHHYQSQQMTQQQQQ), and 202 to 253 (QQQL…ILQH). A compositionally biased stretch (polar residues) spans 254–274 (SPTSGKSLSSAPHGTSVQPST). Basic and acidic residues predominate over residues 313–322 (SGRDSVHVSD). DRBM domains are found at residues 344–411 (TPMC…ETKC), 435–546 (TPTV…ILKN), 578–645 (SEIS…ELRK), and 690–758 (NPIS…LLGY). 2 disordered regions span residues 758–833 (YTKP…HTAS) and 922–950 (DIHPGGDGPQVKKDVLARSGSGMKKDFSK). Positions 765–782 (PTKSSFKNPSTGEAGQTN) are enriched in polar residues. Positions 922–937 (DIHPGGDGPQVKKDVL) are enriched in basic and acidic residues.

As to expression, strongly expressed in nervous tissue (at protein level).

It is found in the perikaryon. The protein localises to the cell projection. Functionally, RNA-binding protein which is required for syntaxin location in sensory neurons during long-term synaptic facilitation. Binds to syntaxin mRNA and is required to maintain its accumulation at the axon hillock following neuronal stimulation and at the opposite pole in stable unstimulated sensory neurons. This Aplysia californica (California sea hare) protein is Double-stranded RNA-binding protein Staufen homolog.